The sequence spans 323 residues: Methenyltetrahydromethanopterin cyclohydrolase (323 aa).

It belongs to the MCH family.

It is found in the cytoplasm. It carries out the reaction 5,10-methenyl-5,6,7,8-tetrahydromethanopterin + H2O = N(5)-formyl-5,6,7,8-tetrahydromethanopterin + H(+). Its pathway is one-carbon metabolism; methanogenesis from CO(2); 5,10-methenyl-5,6,7,8-tetrahydromethanopterin from CO(2): step 3/3. Its function is as follows. Catalyzes the reversible interconversion of 5-formyl-H(4)MPT to methenyl-H(4)MPT(+). This Methanocaldococcus jannaschii (strain ATCC 43067 / DSM 2661 / JAL-1 / JCM 10045 / NBRC 100440) (Methanococcus jannaschii) protein is Methenyltetrahydromethanopterin cyclohydrolase (mch).